The sequence spans 346 residues: Very-long-chain 3-oxoacyl-CoA reductase (346 aa).

Residues Val-19–Thr-39 form a helical membrane-spanning segment. Residues Val-65, Asp-119, Asn-146, Tyr-220, Lys-224, Val-253, and Ser-255 each contribute to the NADP(+) site. The Proton donor role is filled by Tyr-220. Catalysis depends on Lys-224, which acts as the Lowers pKa of active site Tyr.

The protein belongs to the short-chain dehydrogenases/reductases (SDR) family.

Its subcellular location is the endoplasmic reticulum membrane. The enzyme catalyses a very-long-chain (3R)-3-hydroxyacyl-CoA + NADP(+) = a very-long-chain 3-oxoacyl-CoA + NADPH + H(+). It functions in the pathway lipid metabolism; fatty acid biosynthesis. Functionally, component of the microsomal membrane bound fatty acid elongation system, which produces the 26-carbon very long-chain fatty acids (VLCFA) from palmitate. Catalyzes the reduction of the 3-ketoacyl-CoA intermediate that is formed in each cycle of fatty acid elongation. VLCFAs serve as precursors for ceramide and sphingolipids. This is Very-long-chain 3-oxoacyl-CoA reductase from Scheffersomyces stipitis (strain ATCC 58785 / CBS 6054 / NBRC 10063 / NRRL Y-11545) (Yeast).